The sequence spans 621 residues: Glutathione-regulated potassium-efflux system protein KefC (621 aa).

Helical transmembrane passes span 4-24 (HTLIQALIYLGAAALIVPIAV), 26-46 (LGLGSVLGYLIAGCIIGPWAL), 54-74 (AILHFAEIGVVLMLFVIGLEL), 90-110 (GALQMVACGVLIGLFCMLLGL), 114-134 (VAELIGMTLALSSTAIAMQAM), 149-169 (FAVLLFQDIAAIPLVAMIPLL), 178-198 (LMAFALSALKVAAALALVVVL), 218-237 (VFSAVALFLVFGFGLLLEEV), 238-257 (GLSMAMGAFLAGVLLASSEY), 270-290 (GLLLGLFFIGVGMSIDFGTLV), 294-314 (LRIVILLVGFLAIKMLMLWLI), 326-346 (RWFAVLLGQGSEFAFVVFGAA), and 359-379 (ALTLAVALSMAATPILLVLLT). The RCK N-terminal domain occupies 399–518 (QPRVIVAGFG…AGVEAPERET (120 aa)). The disordered stretch occupies residues 598–621 (GWQGTEEGRHTGDIADEPENKPSA).

Belongs to the monovalent cation:proton antiporter 2 (CPA2) transporter (TC 2.A.37) family. KefC subfamily. As to quaternary structure, homodimer. Interacts with the regulatory subunit KefF.

It is found in the cell inner membrane. Pore-forming subunit of a potassium efflux system that confers protection against electrophiles. Catalyzes K(+)/H(+) antiport. The protein is Glutathione-regulated potassium-efflux system protein KefC of Klebsiella pneumoniae subsp. pneumoniae (strain ATCC 700721 / MGH 78578).